An 89-amino-acid polypeptide reads, in one-letter code: NADH-ubiquinone oxidoreductase chain 4L (89 aa).

Helical transmembrane passes span 1-21, 22-42, and 55-75; these read MNFSIFLFLIGILGFVLNRKN, IILMLISIEIMLLAITFLILI, and FAIYIITIAGAESAIGLGILV.

The protein belongs to the complex I subunit 4L family.

It is found in the mitochondrion membrane. The enzyme catalyses a ubiquinone + NADH + 5 H(+)(in) = a ubiquinol + NAD(+) + 4 H(+)(out). In terms of biological role, core subunit of the mitochondrial membrane respiratory chain NADH dehydrogenase (Complex I) that is believed to belong to the minimal assembly required for catalysis. Complex I functions in the transfer of electrons from NADH to the respiratory chain. The immediate electron acceptor for the enzyme is believed to be ubiquinone. The chain is NADH-ubiquinone oxidoreductase chain 4L (nd4L) from Talaromyces marneffei (Penicillium marneffei).